The chain runs to 540 residues: Solute carrier family 2, facilitated glucose transporter member 9 (540 aa).

Positions 1-31 (MARKQNRNSKELGLVPLTDDTSHAGPPGPGR) are disordered. Residues 1–51 (MARKQNRNSKELGLVPLTDDTSHAGPPGPGRALLECDHLRSGVPGGRRRKD) lie on the Cytoplasmic side of the membrane. Residue serine 9 is modified to Phosphoserine. Residues 52–72 (WSCSLLVASLAGAFGSSFLYG) form a helical membrane-spanning segment. The Extracellular portion of the chain corresponds to 73–107 (YNLSVVNAPTPYIKAFYNESWERRHGRPIDPDTLT). Residue asparagine 90 is glycosylated (N-linked (GlcNAc...) asparagine). Residues 108-128 (LLWSVTVSIFAIGGLVGTLIV) traverse the membrane as a helical segment. At 129–140 (KMIGKVLGRKHT) the chain is on the cytoplasmic side. Residues 141–161 (LLANNGFAISAALLMACSLQA) traverse the membrane as a helical segment. Residues 162–171 (GAFEMLIVGR) are Extracellular-facing. Residues 172–192 (FIMGIDGGVALSVLPMYLSEI) traverse the membrane as a helical segment. Over 193–200 (SPKEIRGS) the chain is Cytoplasmic. Residues 201–221 (LGQVTAIFICIGVFTGQLLGL) form a helical membrane-spanning segment. Over 222–231 (PELLGKESTW) the chain is Extracellular. The helical transmembrane segment at 232–252 (PYLFGVIVVPAVVQLLSLPFL) threads the bilayer. The Cytoplasmic portion of the chain corresponds to 253–316 (PDSPRYLLLE…LLRAPYVRWQ (64 aa)). A helical transmembrane segment spans residues 317–337 (VVTVIVTMACYQLCGLNAIWF). Residues 338–354 (YTNSIFGKAGIPPAKIP) lie on the Extracellular side of the membrane. A helical transmembrane segment spans residues 355 to 375 (YVTLSTGGIETLAAVFSGLVI). At 376-381 (EHLGRR) the chain is on the cytoplasmic side. Residues 382–402 (PLLIGGFGLMGLFFGTLTITL) form a helical membrane-spanning segment. Over 403–415 (TLQDHAPWVPYLS) the chain is Extracellular. The chain crosses the membrane as a helical span at residues 416–436 (IVGILAIIASFCSGPGGIPFI). Residues 437 to 451 (LTGEFFQQSQRPAAF) lie on the Cytoplasmic side of the membrane. The helical transmembrane segment at 452 to 472 (IIAGTVNWLSNFAVGLLFPFI) threads the bilayer. Over 473 to 478 (QKSLDT) the chain is Extracellular. Residues 479–499 (YCFLVFATICITGAIYLYFVL) form a helical membrane-spanning segment. Residues 500 to 540 (PETKNRTYAEISQAFSKRNKAYPPEEKIDSAVTDGKINGRP) are Cytoplasmic-facing. Serine 515 bears the Phosphoserine mark. Residues 519-540 (KAYPPEEKIDSAVTDGKINGRP) form a disordered region.

The protein belongs to the major facilitator superfamily. Sugar transporter (TC 2.A.1.1) family. Glucose transporter subfamily. In terms of tissue distribution, most strongly expressed in basolateral membranes of proximal renal tubular cells, liver and placenta. Also detected in lung, blood leukocytes, heart skeletal muscle and chondrocytes from articular cartilage. Detected in kidney membrane (at protein level). Only detected in the apical membranes of polarized renal tubular cells and placenta. Detected in kidney membrane (at protein level).

The protein resides in the cell membrane. The protein localises to the basolateral cell membrane. It localises to the apical cell membrane. It catalyses the reaction urate(out) = urate(in). With respect to regulation, extracellular glucose and urate accelerate urate efflux. Intracellular urate, glucose and fructose accelerate urate influx. No effect of extracellular urate, glucose or fructose on urate efflux. Intracellular urate and fructose slightly accelerate urate influx. Its function is as follows. High-capacity urate transporter, which may play a role in the urate reabsorption by proximal tubules. May have a residual high-affinity, low-capacity glucose and fructose transporter activity. Transports urate at rates 45- to 60-fold faster than glucose. Does not transport galactose. May mediate small uptake of adenine but not of other nucleobases. This chain is Solute carrier family 2, facilitated glucose transporter member 9, found in Homo sapiens (Human).